The primary structure comprises 643 residues: Alpha-dioxygenase 1 (643 aa).

H167 acts as the Proton acceptor in catalysis. D168 contributes to the Ca(2+) binding site. Residue H172 participates in heme b binding. Ca(2+) is bound by residues T220, W222, D224, and S226. Heme b contacts are provided by H392, R489, and R493.

Belongs to the peroxidase family. The cofactor is heme b. Ca(2+) is required as a cofactor.

In terms of biological role, alpha-dioxygenase that catalyzes the primary oxygenation step of a variety of 14-20 carbon fatty acids, containing up to three unsaturated bonds, into their corresponding 2R-hydroperoxides. Involved in the production of oxylipins that function in cell signaling, wound healing, and protection from infection. The lipid-derived signaling pathway is involved in the initial response of hot pepper plants to pathogen infection. The protein is Alpha-dioxygenase 1 of Capsicum annuum (Capsicum pepper).